The chain runs to 166 residues: Ureidoglycolate lyase (166 aa).

This sequence belongs to the ureidoglycolate lyase family. In terms of assembly, homodimer. It depends on Ni(2+) as a cofactor.

The enzyme catalyses (S)-ureidoglycolate = urea + glyoxylate. It functions in the pathway nitrogen metabolism; (S)-allantoin degradation. Its function is as follows. Catalyzes the catabolism of the allantoin degradation intermediate (S)-ureidoglycolate, generating urea and glyoxylate. Involved in the utilization of allantoin as nitrogen source. The protein is Ureidoglycolate lyase of Rhizobium etli (strain CIAT 652).